A 1220-amino-acid polypeptide reads, in one-letter code: MFVHRLWTLAFPFLVEISKASQLENIKSLLDIEDNVLPNLNISQNNSNAVQILGGVDALSFYEYTGQQNFTKEIGPETSSHGLVYYSNNTYIQLEDASDDTRIDKITPFGVDSFILSGSGTINNISVGNQILYNLSTLSMTPIFNQSLGAVQAVLADNSSIYFGGNFSYNNGSMTGYSALIWDSISNTTQLLPFGGFGENSSVNSIVKLNNDNILFAGQFYTLDDPSALISSSNNGTNSTSSLNATTLELGQRIPLRYASWDSQGSTTFASDSLVCPNTNEDAWLYPDTSGSLVCNLPYEVSPTKIRLYNSQRSDSEISVFQILTDPSSSIMNLTYLDPLSGELKNCGEFCPLYSRATLLSASQNVSSSMDMITFIDNNKTDVKWTSDFQDFAFVNELPVSSLKFVALNSYGGSVGLSGLELYQDTFSTYANDSLNEYGCSALTNDSSSSTLSSNDWYNGLTGESYIAAKYVPDQNEPIPRVKFYPNIIHPGHYTINMYTPGCLQDNTCSARGIVNVTMWNQQNNTIMKTYLIYQNNDNLKYDQIYSGYLDFSPEIVLEYVSGIYTTNTATVVVADQVNVITVSLDAFNTLSDSSNAKKETLLNGILQYQKSNFTSTRLNETKVGNTTLNLFPVKNYPKNSSLYADIYDNKLVIGGVSNRISIVDLNDDFEVTSSKNQTIQGDVHGITKTNQGLLIFGDILSSNNQSAVFLFNGSFENVFNQSRTVNSALNISLANNDFIVLDNDYVVNASSNALIRNSSSFSLSLWAAGNNGDGDVLFSGAVSHMQYGNLNGSVRFLNENEIEPLNLEGGIVPYLGAYLNESATAYAYEVDSLNKIYFSNEVYPSWNWSSGITQMLYADNQTLLAVSAGSSTTAELSIFDLRNLTMIANETLGSNARINALVNFEKNCSMLVGGDFQMTEPNCTGLCLYNYESKTWSTFLNNTIFGEITQLSFTNSSELIISGLFETKEYQSIRLGSFNLTNSTMIPLLSGSEGKLNSFTVTEDSIVAWNDTSLFIYRNQEWNITSLPGNASSISSVSAIYTDIESNTLNKRGINNVNNGSILLLNGNFNISQYGYLQSLLFDFQKWTPYFISETTNTSNYNPIIFINRDVSTEFNSQSPLANVNITVTSPQSTSSQPPSSSASSESKSKSKKKKIGRGFVVLIGLALALGTVSVLGIAGVILAYVFKDPEGDYKPIKPRIDENEMLDTVPPEKLMKFV.

An N-terminal signal peptide occupies residues 1–20 (MFVHRLWTLAFPFLVEISKA). At 21-1162 (SQLENIKSLL…KKKKIGRGFV (1142 aa)) the chain is on the extracellular side. N-linked (GlcNAc...) asparagine glycans are attached at residues Asn-41, Asn-45, Asn-69, Asn-88, Asn-124, Asn-134, Asn-145, Asn-158, Asn-166, Asn-171, Asn-187, Asn-200, Asn-235, Asn-238, Asn-244, Asn-333, Asn-365, Asn-379, Asn-432, Asn-445, Asn-516, Asn-524, Asn-613, Asn-620, Asn-626, Asn-640, Asn-677, Asn-705, Asn-713, Asn-721, Asn-731, Asn-749, Asn-758, Asn-792, Asn-821, Asn-848, Asn-861, Asn-884, Asn-890, Asn-908, Asn-923, Asn-942, Asn-956, Asn-980, Asn-983, Asn-1011, Asn-1024, Asn-1031, Asn-1060, Asn-1071, Asn-1098, and Asn-1126. The segment at 1129 to 1151 (VTSPQSTSSQPPSSSASSESKSK) is disordered. Residues 1131-1147 (SPQSTSSQPPSSSASSE) are compositionally biased toward low complexity. The chain crosses the membrane as a helical span at residues 1163–1183 (VLIGLALALGTVSVLGIAGVI). The Cytoplasmic portion of the chain corresponds to 1184–1220 (LAYVFKDPEGDYKPIKPRIDENEMLDTVPPEKLMKFV).

Belongs to the RAX2 family. As to quaternary structure, forms an heterodimeric complex with RAX1. Interacts with BUD8 at the proximal or distal pole in unbudded cells. Interacts with BUD9 at the birth scar in budded mother cells. Post-translationally, glycosylated.

The protein localises to the cell membrane. The protein resides in the bud neck. It localises to the bud tip. Its function is as follows. Required for the maintenance of the bipolar budding pattern. Involved in selecting bud sites at both the distal and proximal poles of daughter cells as well as near previously used division sites on mother cells. The RAX1-RAX2 complex performs the asymmetric localization of the two cortical landmarks, BUD8 and BUD9, at the distal and proximal poles, respectively. This chain is Bud site selection protein RAX2 (RAX2), found in Saccharomyces cerevisiae (strain ATCC 204508 / S288c) (Baker's yeast).